A 378-amino-acid chain; its full sequence is Leukosialin (378 aa).

The signal sequence occupies residues 1–7; the sequence is WAQVVSQ. Topologically, residues 8–231 are extracellular; the sequence is ENLPNTMTML…TVPPRPGSSG (224 aa). 3 O-linked (GalNAc...) threonine glycosylation sites follow: Thr13, Thr15, and Thr20. The segment at 13 to 33 is disordered; that stretch reads TMTMLPFTPNSESPSTSEALS. O-linked (GalNAc...) serine glycans are attached at residues Ser23, Ser25, and Ser27. Thr28 is a glycosylation site (O-linked (GalNAc...) threonine). 2 O-linked (GalNAc...) serine glycosylation sites follow: Ser29 and Ser33. O-linked (GalNAc...) threonine glycosylation is present at Thr34. 2 O-linked (GalNAc...) serine glycosylation sites follow: Ser36 and Ser37. O-linked (GalNAc...) threonine glycosylation is present at Thr40. Ser108 and Ser113 each carry an O-linked (GalNAc...) serine glycan. O-linked (GalNAc...) threonine glycosylation is found at Thr118, Thr120, and Thr124. 2 O-linked (GalNAc...) serine glycosylation sites follow: Ser125 and Ser126. Thr174 carries O-linked (GalNAc...) threonine glycosylation. O-linked (GalNAc...) serine glycosylation is found at Ser176 and Ser180. An O-linked (GalNAc...) threonine glycan is attached at Thr183. O-linked (GalNAc...) serine glycosylation occurs at Ser187. Thr189 is a glycosylation site (O-linked (GalNAc...) threonine). A helical transmembrane segment spans residues 232–254; that stretch reads MLLVSMLIALTVVLVLVALLLLW. A required for interaction with EZR, MSN and RDX and for co-localization to microvilli region spans residues 255-285; that stretch reads RQRQKRRTGALTLSRGGKRNGTVDAWAGPAR. The Cytoplasmic segment spans residues 255-378; it reads RQRQKRRTGA…AKDGAAPQSL (124 aa). Residues 259-273 carry the Nuclear localization signal motif; that stretch reads KRRTGALTLSRGGKR. The disordered stretch occupies residues 265-378; that stretch reads LTLSRGGKRN…AKDGAAPQSL (114 aa). Ser268 carries the post-translational modification Phosphoserine. Position 276 is a phosphothreonine (Thr276). Over residues 310–321 the composition is skewed to polar residues; it reads GSGQRPTLTTFF. Residue Ser311 is modified to Phosphoserine. Thr316 bears the Phosphothreonine mark. 2 positions are modified to phosphoserine: Ser322 and Ser326. Ser330 carries the post-translational modification Phosphoserine; by PKC/PRKCQ. Ser354 carries the post-translational modification Phosphoserine. Phosphothreonine is present on Thr361.

Interacts with SIGLEC1. In terms of assembly, monomer. Interacts with CTNNB1. Interacts with EZR, MSN and RDX (via FERM domain). In terms of processing, has a high content of sialic acid and O-linked carbohydrate structures. Phosphorylation at Ser-330 is regulated by chemokines, requires its association with ERM proteins (EZR, RDX and MSN) and is essential for its function in the regulation of T-cell trafficking to lymph nodes. Post-translationally, cleavage by CTSG releases its extracellular domain and triggers its intramembrane proteolysis by gamma-secretase releasing the CD43 cytoplasmic tail chain (CD43-ct) which translocates to the nucleus. In terms of processing, sumoylated. As to expression, cell surface of thymocytes, T-lymphocytes, neutrophils, plasma cells and myelomas.

The protein resides in the membrane. It is found in the cell projection. The protein localises to the microvillus. It localises to the uropodium. Its subcellular location is the nucleus. The protein resides in the PML body. Predominant cell surface sialoprotein of leukocytes which regulates multiple T-cell functions, including T-cell activation, proliferation, differentiation, trafficking and migration. Positively regulates T-cell trafficking to lymph-nodes via its association with ERM proteins (EZR, RDX and MSN). Negatively regulates Th2 cell differentiation and predisposes the differentiation of T-cells towards a Th1 lineage commitment. Promotes the expression of IFN-gamma by T-cells during T-cell receptor (TCR) activation of naive cells and induces the expression of IFN-gamma by CD4(+) T-cells and to a lesser extent by CD8(+) T-cells. Plays a role in preparing T-cells for cytokine sensing and differentiation into effector cells by inducing the expression of cytokine receptors IFNGR and IL4R, promoting IFNGR and IL4R signaling and by mediating the clustering of IFNGR with TCR. Acts as a major E-selectin ligand responsible for Th17 cell rolling on activated vasculature and recruitment during inflammation. Mediates Th17 cells, but not Th1 cells, adhesion to E-selectin. Acts as a T-cell counter-receptor for SIGLEC1. Functionally, protects cells from apoptotic signals, promoting cell survival. This Rattus norvegicus (Rat) protein is Leukosialin (Spn).